Reading from the N-terminus, the 320-residue chain is Malate dehydrogenase (320 aa).

Residues 10–15 (GAGNIG) and Asp34 each bind NAD(+). Substrate is bound by residues Arg83 and Arg89. Residues Asn96 and 119-121 (ITN) each bind NAD(+). Substrate is bound by residues Asn121 and Arg152. Residue His176 is the Proton acceptor of the active site.

It belongs to the LDH/MDH superfamily. MDH type 3 family.

The catalysed reaction is (S)-malate + NAD(+) = oxaloacetate + NADH + H(+). Functionally, catalyzes the reversible oxidation of malate to oxaloacetate. The protein is Malate dehydrogenase of Rhizorhabdus wittichii (strain DSM 6014 / CCUG 31198 / JCM 15750 / NBRC 105917 / EY 4224 / RW1) (Sphingomonas wittichii).